Here is a 1937-residue protein sequence, read N- to C-terminus: Collagen-like protein 7 (1937 aa).

N-linked (GlcNAc...) asparagine; by host glycosylation is found at Asn6 and Asn21. Disordered regions lie at residues 88-248, 294-531, 583-643, and 670-1144; these read CKGN…KGDK, NLKG…PDLG, LKGD…NQGV, and IKGD…DTAT. Collagen-like domains are found at residues 102–161, 168–227, 297–356, 363–422, and 453–512; these read GPKG…KGEK, GEKG…KGDI, GEKG…KGEK, GDKG…IGEK, and GDKG…KGDK. Over residues 296 to 514 the composition is skewed to basic and acidic residues; sequence KGEKGDKGNK…DKGDKGDKGD (219 aa). Asn515 is a glycosylation site (N-linked (GlcNAc...) asparagine; by host). 3 stretches are compositionally biased toward basic and acidic residues: residues 584–605, 614–625, and 670–899; these read KGDK…KGDK, KGEKGDKGDKGD, and IKGD…KGDK. 5 consecutive Collagen-like domains span residues 672-731, 735-854, 867-926, 936-995, and 1023-1142; these read GDKG…KGDK, GNKG…KGNI, GLKG…KGDK, GIKG…KGDK, and GSKG…KGDT. Asn902 carries an N-linked (GlcNAc...) asparagine; by host glycan. Positions 907 to 1141 are enriched in basic and acidic residues; that stretch reads YKGDKGDKGS…DKGDKGDKGD (235 aa). 35 N-linked (GlcNAc...) asparagine; by host glycosylation sites follow: Asn1178, Asn1192, Asn1212, Asn1217, Asn1245, Asn1246, Asn1255, Asn1317, Asn1422, Asn1427, Asn1432, Asn1443, Asn1452, Asn1477, Asn1494, Asn1506, Asn1513, Asn1533, Asn1598, Asn1619, Asn1620, Asn1632, Asn1641, Asn1663, Asn1664, Asn1672, Asn1682, Asn1683, Asn1732, Asn1735, Asn1746, Asn1756, Asn1784, Asn1842, and Asn1934.

May be hydroxylated on lysine by the viral-encoded procollagen-lysine,2-oxoglutarate 5-dioxygenase.

The protein resides in the virion. May participate in the formation of a layer of cross-linked glycosylated fibrils at the viral surface thus giving it a hairy-like appearance. The protein is Collagen-like protein 7 of Acanthamoeba polyphaga mimivirus (APMV).